The primary structure comprises 481 residues: Pre-mRNA-splicing factor sap114 (481 aa).

Residues 1 to 15 (MSSLMEFQDRNTTNN) show a composition bias toward polar residues. The disordered stretch occupies residues 1–34 (MSSLMEFQDRNTTNNETEHQKSITDQSSSVPAGV). 2 SURP motif repeats span residues 44-86 (IIDK…HPYY) and 147-189 (VLRL…YPYF). Disordered regions lie at residues 335–373 (PSLA…QKPV) and 452–481 (GVEI…NKRR). Composition is skewed to polar residues over residues 345-368 (ISST…TQPK) and 467-481 (ATQS…NKRR).

In terms of assembly, belongs to the 40S cdc5-associated complex (or cwf complex), a spliceosome sub-complex reminiscent of a late-stage spliceosome composed of the U2, U5 and U6 snRNAs and at least brr2, cdc5, cwf2/prp3, cwf3/syf1, cwf4/syf3, cwf5/ecm2, spp42/cwf6, cwf7/spf27, cwf8, cwf9, cwf10, cwf11, cwf12, prp45/cwf13, cwf14, cwf15, cwf16, cwf17, cwf18, cwf19, cwf20, cwf21, cwf22, cwf23, cwf24, cwf25, cwf26, cyp7/cwf27, cwf28, cwf29/ist3, lea1, msl1, prp5/cwf1, prp10, prp12/sap130, prp17, prp22, sap61, sap62, sap114, sap145, slu7, smb1, smd1, smd3, smf1, smg1 and syf2.

Its subcellular location is the nucleus. Functionally, involved in pre-mRNA splicing. May be involved in endoplasmic reticulum-associated protein degradation (ERAD) and required for growth at low and high temperatures. This chain is Pre-mRNA-splicing factor sap114 (sap114), found in Schizosaccharomyces pombe (strain 972 / ATCC 24843) (Fission yeast).